We begin with the raw amino-acid sequence, 279 residues long: Methyltransferase prhM (279 aa).

S-adenosyl-L-methionine is bound by residues 124–125 and 152–153; these read DI and DV.

It belongs to the class I-like SAM-binding methyltransferase superfamily.

Its pathway is secondary metabolite biosynthesis; terpenoid biosynthesis. Its function is as follows. Methyltransferase; part of the gene cluster that mediates the biosynthesis of paraherquonin, a meroterpenoid with a unique, highly congested hexacyclic molecular architecture. The first step of the pathway is the synthesis of 3,5-dimethylorsellinic acid (DMOA) by the polyketide synthase prhL. Synthesis of DMOA is followed by farnesylation by the prenyltransferase prhE, methylesterification by the methyl-transferase prhM, epoxidation of the prenyl chain by the flavin-dependent monooxygenase prhF, and cyclization of the farnesyl moiety by the terpene cyclase prhH, to yield the tetracyclic intermediate, protoaustinoid A. The short chain dehydrogenase prhI then oxidizes the C-3 alcohol group of the terpene cyclase product to transform protoaustinoid A into protoaustinoid B. The FAD-binding monooxygenase prhJ catalyzes the oxidation of protoaustinoid B into preaustinoid A which is further oxidized into preaustinoid A1 by FAD-binding monooxygenase phrK. Finally, prhA leads to berkeleydione via the berkeleyone B intermediate. PrhA is a multifunctional dioxygenase that first desaturates at C5-C6 to form berkeleyone B, followed by rearrangement of the A/B-ring to form the cycloheptadiene moiety in berkeleydione. Berkeleydione serves as the key intermediate for the biosynthesis of paraherquonin as well as many other meroterpenoids. The cytochrome P450 monooxygenases prhB, prhD, and prhN, as well as the isomerase prhC, are probably involved in the late stage of paraherquonin biosynthesis, after the production of berkeleydione. Especially prhC might be a multifunctional enzyme that catalyzes the D-ring expansion via intramolecular methoxy rearrangement, as well as the hydrolysis of the expanded D-ring. In Penicillium brasilianum, this protein is Methyltransferase prhM.